The chain runs to 496 residues: Ribose import ATP-binding protein RbsA (496 aa).

2 consecutive ABC transporter domains span residues 5–241 (LQMK…VGRE) and 252–496 (SPGE…VGGE). ATP is bound at residue 37–44 (GENGAGKS).

This sequence belongs to the ABC transporter superfamily. Ribose importer (TC 3.A.1.2.1) family. The complex is composed of an ATP-binding protein (RbsA), two transmembrane proteins (RbsC) and a solute-binding protein (RbsB).

Its subcellular location is the cell membrane. The enzyme catalyses D-ribose(out) + ATP + H2O = D-ribose(in) + ADP + phosphate + H(+). In terms of biological role, part of the ABC transporter complex RbsABC involved in ribose import. Responsible for energy coupling to the transport system. The polypeptide is Ribose import ATP-binding protein RbsA (Caldanaerobacter subterraneus subsp. tengcongensis (strain DSM 15242 / JCM 11007 / NBRC 100824 / MB4) (Thermoanaerobacter tengcongensis)).